The sequence spans 582 residues: Beta-glucosidase 28 (582 aa).

The N-terminal stretch at 1–21 (MKMHFFILLVITSWLSEKITS) is a signal peptide. Residues Q48, H151, and 196-197 (NE) each bind a beta-D-glucoside. Residue E197 is the Proton donor of the active site. C216 and C224 are joined by a disulfide. N-linked (GlcNAc...) asparagine glycans are attached at residues N255 and N330. Y340 lines the a beta-D-glucoside pocket. An N-linked (GlcNAc...) asparagine glycan is attached at N370. E412 is an a beta-D-glucoside binding site. E412 serves as the catalytic Nucleophile. N430 carries an N-linked (GlcNAc...) asparagine glycan. A beta-D-glucoside is bound by residues W462, 469 to 470 (EW), and F478. N-linked (GlcNAc...) asparagine glycosylation is found at N521 and N544.

The protein belongs to the glycosyl hydrolase 1 family.

It carries out the reaction Hydrolysis of terminal, non-reducing beta-D-glucosyl residues with release of beta-D-glucose.. In Arabidopsis thaliana (Mouse-ear cress), this protein is Beta-glucosidase 28.